The following is a 127-amino-acid chain: Thioredoxin domain-containing protein 8 (127 aa).

The region spanning 2 to 127 (VQKIKSMREF…KLEEKIQELM (126 aa)) is the Thioredoxin domain. C32 and C35 are oxidised to a cystine.

The protein belongs to the thioredoxin family. As to expression, testis-specific. Expressed in spermatozoa, sperm tail, elongated and round spermatids.

The protein resides in the cytoplasm. It localises to the golgi apparatus. In terms of biological role, may be required for post-translational modifications of proteins required for acrosomal biogenesis. May act by reducing disulfide bonds within the sperm. The protein is Thioredoxin domain-containing protein 8 (Txndc8) of Rattus norvegicus (Rat).